Reading from the N-terminus, the 267-residue chain is Methylglyoxal reductase DkgB (267 aa).

Catalysis depends on Tyr39, which acts as the Proton donor. His97 contacts substrate. Residue 179–231 (MTLAYGKALKDEVIARIAAKHNATPAQVILAWAMGEGYSVIPSSTKRENLESN) participates in NADP(+) binding.

It belongs to the aldo/keto reductase family. As to quaternary structure, monomer.

It localises to the cytoplasm. The catalysed reaction is hydroxyacetone + NADP(+) = methylglyoxal + NADPH + H(+). Its function is as follows. Aldo-keto reductase that significantly contributes to cellular methylglyoxal detoxification by catalyzing the NADPH-dependent conversion of methylglyoxal to acetol. The protein is Methylglyoxal reductase DkgB of Escherichia coli O157:H7.